The sequence spans 321 residues: Malate dehydrogenase (321 aa).

Residues 10-15 (GSGMIG) and aspartate 34 contribute to the NAD(+) site. 2 residues coordinate substrate: arginine 83 and arginine 89. NAD(+) is bound by residues asparagine 96 and 119-121 (ITN). Substrate contacts are provided by asparagine 121 and arginine 152. The active-site Proton acceptor is histidine 176.

Belongs to the LDH/MDH superfamily. MDH type 3 family.

The enzyme catalyses (S)-malate + NAD(+) = oxaloacetate + NADH + H(+). Functionally, catalyzes the reversible oxidation of malate to oxaloacetate. This chain is Malate dehydrogenase, found in Bartonella bacilliformis (strain ATCC 35685 / KC583 / Herrer 020/F12,63).